Here is a 141-residue protein sequence, read N- to C-terminus: Large ribosomal subunit protein uL16 (141 aa).

The protein belongs to the universal ribosomal protein uL16 family. Part of the 50S ribosomal subunit.

Functionally, binds 23S rRNA and is also seen to make contacts with the A and possibly P site tRNAs. This chain is Large ribosomal subunit protein uL16, found in Kosmotoga olearia (strain ATCC BAA-1733 / DSM 21960 / TBF 19.5.1).